A 513-amino-acid polypeptide reads, in one-letter code: ATP synthase subunit alpha (513 aa).

169–176 (GDRQTGKT) provides a ligand contact to ATP.

Belongs to the ATPase alpha/beta chains family. In terms of assembly, F-type ATPases have 2 components, CF(1) - the catalytic core - and CF(0) - the membrane proton channel. CF(1) has five subunits: alpha(3), beta(3), gamma(1), delta(1), epsilon(1). CF(0) has three main subunits: a(1), b(2) and c(9-12). The alpha and beta chains form an alternating ring which encloses part of the gamma chain. CF(1) is attached to CF(0) by a central stalk formed by the gamma and epsilon chains, while a peripheral stalk is formed by the delta and b chains.

The protein localises to the cell inner membrane. It catalyses the reaction ATP + H2O + 4 H(+)(in) = ADP + phosphate + 5 H(+)(out). Produces ATP from ADP in the presence of a proton gradient across the membrane. The alpha chain is a regulatory subunit. The polypeptide is ATP synthase subunit alpha (Bordetella pertussis (strain Tohama I / ATCC BAA-589 / NCTC 13251)).